Here is a 217-residue protein sequence, read N- to C-terminus: UPF0502 protein PFLU_2135 (217 aa).

It belongs to the UPF0502 family.

The polypeptide is UPF0502 protein PFLU_2135 (Pseudomonas fluorescens (strain SBW25)).